We begin with the raw amino-acid sequence, 123 residues long: Transmembrane protein 80 (123 aa).

The next 4 membrane-spanning stretches (helical) occupy residues 2-22 (LFHL…LMIV), 35-55 (LALD…QLYL), 68-88 (LAAS…FLLW), and 102-122 (VLLV…ADFI).

The protein resides in the membrane. It is found in the cell projection. It localises to the cilium. This Mus musculus (Mouse) protein is Transmembrane protein 80 (Tmem80).